The following is a 197-amino-acid chain: Imidazoleglycerol-phosphate dehydratase (197 aa).

The protein belongs to the imidazoleglycerol-phosphate dehydratase family.

Its subcellular location is the cytoplasm. It catalyses the reaction D-erythro-1-(imidazol-4-yl)glycerol 3-phosphate = 3-(imidazol-4-yl)-2-oxopropyl phosphate + H2O. It participates in amino-acid biosynthesis; L-histidine biosynthesis; L-histidine from 5-phospho-alpha-D-ribose 1-diphosphate: step 6/9. The sequence is that of Imidazoleglycerol-phosphate dehydratase from Nitrosomonas europaea (strain ATCC 19718 / CIP 103999 / KCTC 2705 / NBRC 14298).